The sequence spans 778 residues: Ribonucleoside-diphosphate reductase large subunit (778 aa).

Substrate is bound by residues Ser177, 192–193 (SC), Gly221, 419–423 (NLCIE), and 613–617 (PTATS). Cys193 and Cys439 are oxidised to a cystine. The active-site Proton acceptor is Asn419. The active-site Cysteine radical intermediate is Cys421. Glu423 serves as the catalytic Proton acceptor.

It belongs to the ribonucleoside diphosphate reductase large chain family. Heterotetramer composed of a homodimer of the large subunit (R1) and a homodimer of the small subunit (R2). Larger multisubunit protein complex are also active, composed of (R1)n(R2)n.

It carries out the reaction a 2'-deoxyribonucleoside 5'-diphosphate + [thioredoxin]-disulfide + H2O = a ribonucleoside 5'-diphosphate + [thioredoxin]-dithiol. With respect to regulation, under complex allosteric control mediated by deoxynucleoside triphosphates and ATP binding. The type of nucleotide bound at the specificity site determines substrate preference. It seems probable that ATP makes the enzyme reduce CDP and UDP, dGTP favors ADP reduction and dTTP favors GDP reduction. Ribonucleoside-diphosphate reductase holoenzyme provides the precursors necessary for viral DNA synthesis. Allows virus growth in non-dividing cells. Catalyzes the biosynthesis of deoxyribonucleotides from the corresponding ribonucleotides. The protein is Ribonucleoside-diphosphate reductase large subunit of African swine fever virus (isolate Tick/South Africa/Pretoriuskop Pr4/1996) (ASFV).